We begin with the raw amino-acid sequence, 247 residues long: Orotidine 5'-phosphate decarboxylase (247 aa).

Substrate-binding positions include aspartate 22, lysine 44, 71–80 (DLKFHDIPNT), threonine 131, arginine 192, glutamine 201, glycine 221, and arginine 222. Residue lysine 73 is the Proton donor of the active site.

It belongs to the OMP decarboxylase family. Type 1 subfamily. As to quaternary structure, homodimer.

It carries out the reaction orotidine 5'-phosphate + H(+) = UMP + CO2. The protein operates within pyrimidine metabolism; UMP biosynthesis via de novo pathway; UMP from orotate: step 2/2. Its function is as follows. Catalyzes the decarboxylation of orotidine 5'-monophosphate (OMP) to uridine 5'-monophosphate (UMP). The chain is Orotidine 5'-phosphate decarboxylase from Pectobacterium atrosepticum (strain SCRI 1043 / ATCC BAA-672) (Erwinia carotovora subsp. atroseptica).